Reading from the N-terminus, the 657-residue chain is Translation factor GUF1, mitochondrial (657 aa).

The transit peptide at 1–39 directs the protein to the mitochondrion; the sequence is MRGCLQSVKWLTSAVRQSQSLTSSTRFPRRLFNTSTLHY. Residues 59–239 form the tr-type G domain; the sequence is ERFRNFCIVA…TVIEQVPAPV (181 aa). GTP-binding positions include 68–75, 132–136, and 186–189; these read AHVDHGKS, DTPGH, and NKVD.

This sequence belongs to the TRAFAC class translation factor GTPase superfamily. Classic translation factor GTPase family. LepA subfamily.

The protein resides in the mitochondrion inner membrane. The enzyme catalyses GTP + H2O = GDP + phosphate + H(+). Functionally, promotes mitochondrial protein synthesis. May act as a fidelity factor of the translation reaction, by catalyzing a one-codon backward translocation of tRNAs on improperly translocated ribosomes. Binds to mitochondrial ribosomes in a GTP-dependent manner. The chain is Translation factor GUF1, mitochondrial from Blastomyces gilchristii (strain SLH14081) (Blastomyces dermatitidis).